A 199-amino-acid chain; its full sequence is Ras-related and estrogen-regulated growth inhibitor (199 aa).

Residues 13-20, 60-64, and 118-121 each bind GTP; these read GRAGVGKS, DTAGQ, and NKAD.

This sequence belongs to the small GTPase superfamily. Ras family. As to expression, detected in heart, brain, placenta, lung, liver, skin, kidney and pancreas. Detected in estrogen receptor-positive breast-derived cell lines, but not in estrogen receptor-negative cell lines. Expression is decreased or lost in a significant proportion of primary breast tumors with poor clinical prognosis.

It is found in the cytoplasm. The catalysed reaction is GTP + H2O = GDP + phosphate + H(+). In terms of biological role, binds GDP/GTP and possesses intrinsic GTPase activity. Has higher affinity for GDP than for GTP. In cell lines overexpression leads to a reduction in the rate of proliferation, colony formation and in tumorigenic potential. The polypeptide is Ras-related and estrogen-regulated growth inhibitor (RERG) (Homo sapiens (Human)).